Consider the following 306-residue polypeptide: Acetyl-coenzyme A carboxylase carboxyl transferase subunit beta (306 aa).

The 270-residue stretch at 25–294 (LWIKCPETGE…TVVGANDDKT (270 aa)) folds into the CoA carboxyltransferase N-terminal domain.

It belongs to the AccD/PCCB family. As to quaternary structure, acetyl-CoA carboxylase is a heterohexamer composed of biotin carboxyl carrier protein (AccB), biotin carboxylase (AccC) and two subunits each of ACCase subunit alpha (AccA) and ACCase subunit beta (AccD).

The protein resides in the cytoplasm. The catalysed reaction is N(6)-carboxybiotinyl-L-lysyl-[protein] + acetyl-CoA = N(6)-biotinyl-L-lysyl-[protein] + malonyl-CoA. It functions in the pathway lipid metabolism; malonyl-CoA biosynthesis; malonyl-CoA from acetyl-CoA: step 1/1. Functionally, component of the acetyl coenzyme A carboxylase (ACC) complex. Biotin carboxylase (BC) catalyzes the carboxylation of biotin on its carrier protein (BCCP) and then the CO(2) group is transferred by the transcarboxylase to acetyl-CoA to form malonyl-CoA. The sequence is that of Acetyl-coenzyme A carboxylase carboxyl transferase subunit beta from Allorhizobium ampelinum (strain ATCC BAA-846 / DSM 112012 / S4) (Agrobacterium vitis (strain S4)).